Consider the following 509-residue polypeptide: DNA nucleotidylexotransferase (509 aa).

The tract at residues 1 to 24 is disordered; that stretch reads MDPPRASHLSPRKKRPRQTGALMA. Residues 11–17 carry the Nuclear localization signal motif; it reads PRKKRPR. The BRCT domain maps to 27–124; sequence PQDIKFQDLV…KPVEMTGKHQ (98 aa). Ser-134 carries the phosphoserine modification. The segment at 151–509 is mediates interaction with DNTTIP2; it reads SQYACQRRTT…DYIEPWERNA (359 aa). Residues 258 to 262 form an involved in DNA binding region; sequence VGLKT. A 2'-deoxyribonucleoside 5'-triphosphate is bound by residues 333–338 and 342–345; these read GFRRGK and HDVD. Mg(2+) contacts are provided by Asp-343, Asp-345, and Asp-433. 448–449 lines the a 2'-deoxyribonucleoside 5'-triphosphate pocket; the sequence is GW.

This sequence belongs to the DNA polymerase type-X family. As to quaternary structure, interacts with PRP19 and DNTTIP1. Forms a ternary complex with DNTTIP2 and core histone. Released from this complex by PCNA. Interacts with TRERF1. Mg(2+) is required as a cofactor.

The protein localises to the nucleus. It carries out the reaction DNA(n) + a 2'-deoxyribonucleoside 5'-triphosphate = DNA(n+1) + diphosphate. Functionally, template-independent DNA polymerase which catalyzes the random addition of deoxynucleoside 5'-triphosphate to the 3'-end of a DNA initiator. One of the in vivo functions of this enzyme is the addition of nucleotides at the junction (N region) of rearranged Ig heavy chain and T-cell receptor gene segments during the maturation of B- and T-cells. This is DNA nucleotidylexotransferase (DNTT) from Homo sapiens (Human).